Consider the following 267-residue polypeptide: Tryptophan synthase alpha chain (267 aa).

Residues Glu-49 and Asp-60 each act as proton acceptor in the active site.

The protein belongs to the TrpA family. Tetramer of two alpha and two beta chains.

It carries out the reaction (1S,2R)-1-C-(indol-3-yl)glycerol 3-phosphate + L-serine = D-glyceraldehyde 3-phosphate + L-tryptophan + H2O. Its pathway is amino-acid biosynthesis; L-tryptophan biosynthesis; L-tryptophan from chorismate: step 5/5. Functionally, the alpha subunit is responsible for the aldol cleavage of indoleglycerol phosphate to indole and glyceraldehyde 3-phosphate. This is Tryptophan synthase alpha chain from Geobacter sp. (strain M21).